We begin with the raw amino-acid sequence, 218 residues long: Capsid protein (218 aa).

Residue M1 is modified to N-acetylmethionine; by host. The tract at residues 1-29 (MDKSESTSAGRNHRRRPRRGSRSAPSSAD) is disordered. The segment covering 11 to 21 (RNHRRRPRRGS) has biased composition (basic residues).

It belongs to the cucumovirus capsid protein family.

It localises to the virion. Capsid protein. Probably binds RNA and plays a role in packaging. This chain is Capsid protein, found in Cucumber mosaic virus (strain C) (CMV).